Here is a 151-residue protein sequence, read N- to C-terminus: Large ribosomal subunit protein bL9 (151 aa).

Belongs to the bacterial ribosomal protein bL9 family.

Its function is as follows. Binds to the 23S rRNA. The chain is Large ribosomal subunit protein bL9 from Francisella tularensis subsp. novicida (strain U112).